The chain runs to 379 residues: Cytochrome b (379 aa).

Transmembrane regions (helical) follow at residues 33–53 (FGSLLGICLILQIITGLFLAM), 77–98 (WMIRYMHANGASMFFICLFIHI), 113–133 (WNIGVILLFTTMATAFMGYVL), and 178–198 (FFAFHFILPFIIMALAAVHLL). Heme b is bound by residues H83 and H97. The heme b site is built by H182 and H196. Residue H201 participates in a ubiquinone binding. A run of 4 helical transmembrane segments spans residues 226–246 (MKDIMGFLTMFLALLTLVLFY), 288–308 (LGGVVALMLSILILIFLPMMH), 320–340 (LSQCMFWILVANLLTLTWIGG), and 347–367 (FIMIGQLASLSYFLIILIIMP).

The protein belongs to the cytochrome b family. In terms of assembly, the cytochrome bc1 complex contains 11 subunits: 3 respiratory subunits (MT-CYB, CYC1 and UQCRFS1), 2 core proteins (UQCRC1 and UQCRC2) and 6 low-molecular weight proteins (UQCRH/QCR6, UQCRB/QCR7, UQCRQ/QCR8, UQCR10/QCR9, UQCR11/QCR10 and a cleavage product of UQCRFS1). This cytochrome bc1 complex then forms a dimer. Heme b serves as cofactor.

It is found in the mitochondrion inner membrane. Component of the ubiquinol-cytochrome c reductase complex (complex III or cytochrome b-c1 complex) that is part of the mitochondrial respiratory chain. The b-c1 complex mediates electron transfer from ubiquinol to cytochrome c. Contributes to the generation of a proton gradient across the mitochondrial membrane that is then used for ATP synthesis. This Massoutiera mzabi (Mzab gundi) protein is Cytochrome b (MT-CYB).